A 936-amino-acid chain; its full sequence is F-box protein dre-1 (936 aa).

A disordered region spans residues 1–67; the sequence is MSSSSSPFFH…GSSEADNPTL (67 aa). The segment covering 22-36 has biased composition (low complexity); it reads QQSPSYSQNSNSPSQ. Over residues 48–63 the composition is skewed to polar residues; sequence GSTSMRYSPSGSSEAD. In terms of domain architecture, F-box spans 159-205; sequence QDHINRLPEELLLKVFSFLPDKSLLACSSVSYRFNQISNSHEVWKEL. PbH1 repeat units follow at residues 405–427, 428–450, 451–473, 474–496, 497–519, 520–542, 543–565, 566–588, 589–611, 612–634, 635–657, 658–680, 681–703, 704–726, 727–749, 750–772, 773–795, and 796–818; these read SAAP…YITD, NATG…WVKN, HANP…FTFE, HGQG…EVKN, SANP…YVHE, RGRG…WITS, HSDP…YIFG, EGRG…QIRS, QSDP…YVHE, KGRG…WVTT, GSSP…YFYD, QGHG…QIRT, GSNP…LVYN, GGKG…WIKT, DSEP…CIFN, RGKG…LIST, ESNP…EITN, and GATA…CVAT. The UBR-type zinc-finger motif lies at 843–914; the sequence is GLCLFKVSSN…LERHCHLQNV (72 aa).

As to quaternary structure, component of a SCF ubiquitin ligase complex. Interacts (via F-box) with skr-1. Interacts with blmp-1; the interaction targets blmp-1 for proteasomal degradation. Interacts with ced-9; the interaction inhibits ced-9 activity, either directly or indirectly. In terms of tissue distribution, in mid-embryogenesis, expression is most prominent in epidermal and intestinal cells. By the 1.5-fold stage of embryogenesis, expression is additionally detected in neurons and other cells. During larval and adult stages, highest expression is seen in epidermal seam cells and hypodermis. In larvae, strongly expressed in the P epidermal blast cells and descendents that give rise to the vulva and weakly expressed in the somatic gonad, including the gonadoblasts, the anchor cell and the distal tip cells. Some weak expression also seen in adult spermatheca and uterus. In the musculature, expressed in the pharynx, anal depressor, sex muscles, and body wall muscles. Detected in neurons of the head, tail, ventral cord and periphery. Also expressed in the embryonic tail spike cell.

The protein resides in the nucleus. Its subcellular location is the cytoplasm. It functions in the pathway protein modification; protein ubiquitination. In terms of biological role, substrate recognition component of a SCF (SKP1-CUL1-F-box protein) E3 ubiquitin-protein ligase complex which mediates the ubiquitination and subsequent proteasomal degradation of target proteins including blmp-1. Promotes ubiquitination of snail family proteins ces-1, scrt-1 and snai-1. Heterochronic protein which is required for the timing of gonad development and epidermal seam cell differentiation. Regulates tail-spike cell death through inhibition of the apoptosis regulator ced-9. The chain is F-box protein dre-1 from Caenorhabditis elegans.